The primary structure comprises 256 residues: Acetyl-coenzyme A carboxylase carboxyl transferase subunit alpha (256 aa).

One can recognise a CoA carboxyltransferase C-terminal domain in the interval 1 to 236 (MTDVSRVLKE…KANLIEQITS (236 aa)).

This sequence belongs to the AccA family. In terms of assembly, acetyl-CoA carboxylase is a heterohexamer composed of biotin carboxyl carrier protein (AccB), biotin carboxylase (AccC) and two subunits each of ACCase subunit alpha (AccA) and ACCase subunit beta (AccD).

The protein resides in the cytoplasm. It carries out the reaction N(6)-carboxybiotinyl-L-lysyl-[protein] + acetyl-CoA = N(6)-biotinyl-L-lysyl-[protein] + malonyl-CoA. Its pathway is lipid metabolism; malonyl-CoA biosynthesis; malonyl-CoA from acetyl-CoA: step 1/1. Its function is as follows. Component of the acetyl coenzyme A carboxylase (ACC) complex. First, biotin carboxylase catalyzes the carboxylation of biotin on its carrier protein (BCCP) and then the CO(2) group is transferred by the carboxyltransferase to acetyl-CoA to form malonyl-CoA. This chain is Acetyl-coenzyme A carboxylase carboxyl transferase subunit alpha, found in Streptococcus pyogenes serotype M12 (strain MGAS2096).